The sequence spans 425 residues: Serine/threonine-protein kinase VRK1 (425 aa).

The 292-residue stretch at 38–329 folds into the Protein kinase domain; sequence WKLGSAVGQG…KLRGILQQGL (292 aa). ATP is bound by residues 44–52 and Lys-72; that span reads VGQGGFGLL. Residue Asp-178 is the Proton acceptor of the active site. Positions 343–425 are disordered; that stretch reads GVATNSTSLP…KSRGRPKKNS (83 aa). A compositionally biased stretch (basic residues) spans 415–425; it reads KKSRGRPKKNS.

It belongs to the protein kinase superfamily. CK1 Ser/Thr protein kinase family. VRK subfamily.

Its subcellular location is the nucleus. It localises to the cytoplasm. The protein resides in the cajal body. The catalysed reaction is L-seryl-[protein] + ATP = O-phospho-L-seryl-[protein] + ADP + H(+). The enzyme catalyses L-threonyl-[protein] + ATP = O-phospho-L-threonyl-[protein] + ADP + H(+). Serine/threonine kinase involved in the regulation of key cellular processes including the cell cycle, nuclear condensation, transcription regulation, and DNA damage response. Controls chromatin organization and remodeling by mediating phosphorylation of histone H3 on 'Thr-4' and histone H2AX (H2aXT4ph). It also phosphorylates KAT5 in response to DNA damage, promoting KAT5 association with chromatin and histone acetyltransferase activity. Is involved in the regulation of cell cycle progression of neural progenitors, and is required for proper cortical neuronal migration. Is involved in neurite elongation and branching in motor neurons, and has an essential role in Cajal bodies assembly, acting through COIL phosphorylation and the control of coilin degradation. Involved in Golgi disassembly during the cell cycle: following phosphorylation by PLK3 during mitosis, it is required to induce Golgi fragmentation. Phosphorylates BANF1: disrupts its ability to bind DNA, reduces its binding to LEM domain-containing proteins and causes its relocalization from the nucleus to the cytoplasm. Phosphorylates TP53BP1 and p53/TP53 on 'Thr-18', preventing the interaction between p53/TP53 and MDM2. Phosphorylates ATF2 which activates its transcriptional activity. Phosphorylates JUN. The polypeptide is Serine/threonine-protein kinase VRK1 (vrk1) (Danio rerio (Zebrafish)).